The following is a 475-amino-acid chain: Sulfate adenylyltransferase subunit 1 (475 aa).

The tr-type G domain occupies 25 to 239 (KSLLRFLTCG…EVLETVEIQR (215 aa)). The segment at 34-41 (GSVDDGKS) is G1. 34–41 (GSVDDGKS) contacts GTP. The segment at 92-96 (GITID) is G2. The tract at residues 113–116 (DTPG) is G3. Residues 113-117 (DTPGH) and 168-171 (NKMD) each bind GTP. Residues 168–171 (NKMD) form a G4 region. The segment at 206-208 (SAL) is G5.

Belongs to the TRAFAC class translation factor GTPase superfamily. Classic translation factor GTPase family. CysN/NodQ subfamily. As to quaternary structure, heterodimer composed of CysD, the smaller subunit, and CysN.

The enzyme catalyses sulfate + ATP + H(+) = adenosine 5'-phosphosulfate + diphosphate. Its pathway is sulfur metabolism; hydrogen sulfide biosynthesis; sulfite from sulfate: step 1/3. In terms of biological role, with CysD forms the ATP sulfurylase (ATPS) that catalyzes the adenylation of sulfate producing adenosine 5'-phosphosulfate (APS) and diphosphate, the first enzymatic step in sulfur assimilation pathway. APS synthesis involves the formation of a high-energy phosphoric-sulfuric acid anhydride bond driven by GTP hydrolysis by CysN coupled to ATP hydrolysis by CysD. This chain is Sulfate adenylyltransferase subunit 1, found in Escherichia coli O17:K52:H18 (strain UMN026 / ExPEC).